Consider the following 519-residue polypeptide: MGLQRFSFFVTLALVARSLAAIGPVASLVVANAPVSPDGFLRDAIVVNGVVPSPLITGKKGDRFQLNVDDTLTNHSMLKSTSIHWHGFFQAGTNWADGPAFVNQCPIASGHSFLYDFHVPDQAGTFWYHSHLSTQYCDGLRGPFVVYDPKDPHASRYDVDNESTVITLTDWYHTAARLGPRFPLGADATLINGLGRSASTPTAALAVINVQHGKRYRFRLVSISCDPNYTFSIDGHNLTVIEVDGINSQPLLVDSIQIFAAQRYSFVLNANQTVGNYWVRANPNFGTVGFAGGINSAILRYQGAPVAEPTTTQTTSVIPLIETNLHPLARMPVPGSPTPGGVDKALNLAFNFNGTNFFINNATFTPPTVPVLLQILSGAQTAQDLLPAGSVYPLPAHSTIEITLPATALAPGAPHPFHLHGHAFAVVRSAGSTTYNYNDPIFRDVVSTGTPAAGDNVTIRFQTDNPGPWFLHCHIDFHLDAGFAIVFAEDVADVKAANPVPKAWSDLCPIYDGLSEANQ.

The first 20 residues, Met1–Ala20, serve as a signal peptide directing secretion. Plastocyanin-like domains are found at residues Ile22–Tyr147 and Val159–Tyr301. Asn74 is a glycosylation site (N-linked (GlcNAc...) asparagine). Cu cation-binding residues include His84, His86, His129, and His131. 2 disulfides stabilise this stretch: Cys105–Cys508 and Cys137–Cys225. Asn161, Asn228, Asn237, Asn271, Asn353, and Asn361 each carry an N-linked (GlcNAc...) asparagine glycan. Positions Thr368–Asp490 constitute a Plastocyanin-like 3 domain. Cu cation-binding residues include His415, His418, and His420. Residue Asn456 is glycosylated (N-linked (GlcNAc...) asparagine). The Cu cation site is built by His472, Cys473, His474, and His478.

This sequence belongs to the multicopper oxidase family. Cu cation serves as cofactor.

The protein localises to the secreted. The catalysed reaction is 4 hydroquinone + O2 = 4 benzosemiquinone + 2 H2O. Lignin degradation and detoxification of lignin-derived products. In Trametes versicolor (White-rot fungus), this protein is Laccase-2 (LCC2).